The following is a 590-amino-acid chain: Negative elongation factor C/D (590 aa).

Positions 16-43 (GSAAEWGDEADGGQQEDDSGEGEDDAEV) are disordered. Over residues 21 to 43 (WGDEADGGQQEDDSGEGEDDAEV) the composition is skewed to acidic residues.

The protein belongs to the NELF-D family. As to quaternary structure, the NELF complex is composed of NELFA, NELFB, NELFCD (isoform NELF-C or isoform NELF-D) and NELFE; NELFA and NELFCD form a stable subcomplex that binds primarily through NELFCD to the N-terminus of NELFB. Binds RNA which may help to stabilize the NELF complex on nucleic acid. In vitro, the NELFA:NELFCD subcomplex binds to ssDNA and ssRNA in a sequence- and structure-dependent manner. Interacts with ARAF. Interacts with PCF11. Interacts with KAT8. In terms of tissue distribution, widely expressed. Expressed in heart, brain, lung, placenta, liver, skeletal and cardiac muscle, adrenal, thyroid, kidney and pancreas.

It localises to the nucleus. Its function is as follows. Essential component of the NELF complex, a complex that negatively regulates the elongation of transcription by RNA polymerase II. The NELF complex, which acts via an association with the DSIF complex and causes transcriptional pausing, is counteracted by the P-TEFb kinase complex. Functionally, (Microbial infection) The NELF complex is involved in HIV-1 latency possibly involving recruitment of PCF11 to paused RNA polymerase II. This chain is Negative elongation factor C/D (NELFCD), found in Homo sapiens (Human).